A 584-amino-acid polypeptide reads, in one-letter code: Outer membrane transporter CdiB-2 (584 aa).

Positions 1 to 20 (MATRFAILPVTALITLTAQA) are cleaved as a signal peptide. The segment covering 24–44 (PTPNDQAAAARANAEQNQQAQ) has biased composition (low complexity). Positions 24 to 72 (PTPNDQAAAARANAEQNQQAQQRRDAQQRDATVQAPGVRSDVPRPEAYP) are disordered. A POTRA domain is found at 98–171 (SKAQGASALP…GALKLALIPG (74 aa)).

This sequence belongs to the TPS (TC 1.B.20) family.

The protein localises to the cell outer membrane. Functionally, potential outer membrane protein component of a toxin-immunity protein module, which functions as a cellular contact-dependent growth inhibition (CDI) system. CDI modules allow bacteria to communicate with and inhibit the growth of closely related neighboring bacteria in a contact-dependent fashion. This protein may be required for secretion and assembly of the CdiA toxin protein. Its function is as follows. Expression of this cdiAIB locus in B.thailandensis confers protection against other bacteria carrying the locus; growth inhibition requires cellular contact. In terms of biological role, probable member of a two partner secretion pathway (TPS) in which it mediates the secretion of CdiA2. The protein is Outer membrane transporter CdiB-2 (cdiB2) of Burkholderia pseudomallei (strain 1026b).